The following is a 36-amino-acid chain: Photosystem I reaction center subunit VIII (36 aa).

The chain crosses the membrane as a helical span at residues 9-29; sequence IFVPLVGLVFPAVAMASLFLY.

The protein belongs to the PsaI family.

Its subcellular location is the plastid. The protein resides in the chloroplast thylakoid membrane. In terms of biological role, may help in the organization of the PsaL subunit. This is Photosystem I reaction center subunit VIII from Ostreococcus tauri.